A 101-amino-acid polypeptide reads, in one-letter code: ATP-dependent Clp protease adapter protein ClpS (101 aa).

The protein belongs to the ClpS family. In terms of assembly, binds to the N-terminal domain of the chaperone ClpA.

Its function is as follows. Involved in the modulation of the specificity of the ClpAP-mediated ATP-dependent protein degradation. The protein is ATP-dependent Clp protease adapter protein ClpS of Treponema denticola (strain ATCC 35405 / DSM 14222 / CIP 103919 / JCM 8153 / KCTC 15104).